The following is a 671-amino-acid chain: DNA ligase (671 aa).

NAD(+) contacts are provided by residues 32 to 36 (DAEYD), 81 to 82 (SL), and glutamate 113. Lysine 115 acts as the N6-AMP-lysine intermediate in catalysis. Arginine 136, glutamate 173, lysine 290, and lysine 314 together coordinate NAD(+). Zn(2+)-binding residues include cysteine 408, cysteine 411, cysteine 426, and cysteine 432. The BRCT domain maps to 593–671 (EIDSPFAGKT…EAEMIRLLGA (79 aa)).

It belongs to the NAD-dependent DNA ligase family. LigA subfamily. Mg(2+) is required as a cofactor. It depends on Mn(2+) as a cofactor.

It carries out the reaction NAD(+) + (deoxyribonucleotide)n-3'-hydroxyl + 5'-phospho-(deoxyribonucleotide)m = (deoxyribonucleotide)n+m + AMP + beta-nicotinamide D-nucleotide.. In terms of biological role, DNA ligase that catalyzes the formation of phosphodiester linkages between 5'-phosphoryl and 3'-hydroxyl groups in double-stranded DNA using NAD as a coenzyme and as the energy source for the reaction. It is essential for DNA replication and repair of damaged DNA. The sequence is that of DNA ligase from Salmonella dublin (strain CT_02021853).